The chain runs to 111 residues: Nucleoid-associated protein VF_1686 (111 aa).

2 disordered regions span residues 1-23 and 89-111; these read MFGG…DRMQ and TQKE…KMPF.

This sequence belongs to the YbaB/EbfC family. In terms of assembly, homodimer.

It is found in the cytoplasm. The protein localises to the nucleoid. In terms of biological role, binds to DNA and alters its conformation. May be involved in regulation of gene expression, nucleoid organization and DNA protection. This chain is Nucleoid-associated protein VF_1686, found in Aliivibrio fischeri (strain ATCC 700601 / ES114) (Vibrio fischeri).